We begin with the raw amino-acid sequence, 413 residues long: Transcription factor bHLH23 (413 aa).

The segment at 40–75 (SSQTQTPSCDPPLILRGSGSGDGEGNGPLPQPPPPL) is disordered. Residue Thr186 is modified to Phosphothreonine. Ser191 carries the post-translational modification Phosphoserine. 2 disordered regions span residues 232–278 (TEPV…RSRA) and 391–413 (ETEQETMSLLLREDKRTKQKMFS). The segment covering 246-257 (TDERKRKTREET) has biased composition (basic and acidic residues). Residues 277–326 (RAAIMHKLSERRRRQKINEMMKALQELLPRCTKTDRSSMLDDVIEYVKSL) form the bHLH domain.

In terms of assembly, homodimer. As to expression, expressed constitutively in leaves, stems, and flowers.

It localises to the nucleus. The protein is Transcription factor bHLH23 (BHLH23) of Arabidopsis thaliana (Mouse-ear cress).